The sequence spans 397 residues: Acid extracellular protease (397 aa).

A signal peptide spans 1–17; that stretch reads MQFSLATLTTLLAFVAA. The Peptidase A1 domain occupies 61-378; it reads YQVQISLGGQ…DLERDEVSIA (318 aa). Asp77 is an active-site residue. The N-linked (GlcNAc...) asparagine glycan is linked to Asn88. Cysteines 93 and 100 form a disulfide. Residue Asp264 is part of the active site. An intrachain disulfide couples Cys303 to Cys343. N-linked (GlcNAc...) asparagine glycans are attached at residues Asn310 and Asn314.

It belongs to the peptidase A1 family.

Its subcellular location is the secreted. In Yarrowia lipolytica (strain CLIB 122 / E 150) (Yeast), this protein is Acid extracellular protease (AXP1).